The chain runs to 256 residues: Fructose-1,6-bisphosphatase/inositol-1-monophosphatase (256 aa).

Mg(2+) contacts are provided by Glu65, Asp79, Ile81, and Asp82. Residues 82-84, Arg172, Ala177, and Arg196 each bind substrate; that span reads DGT. Residue Asp201 participates in Mg(2+) binding.

The protein belongs to the inositol monophosphatase superfamily. FBPase class 4 family. As to quaternary structure, homotetramer. Mg(2+) serves as cofactor.

It carries out the reaction beta-D-fructose 1,6-bisphosphate + H2O = beta-D-fructose 6-phosphate + phosphate. The enzyme catalyses a myo-inositol phosphate + H2O = myo-inositol + phosphate. In contrast to mammalian I-1-P phosphatases, is only weakly inhibited by Li(+), since 50% inhibitory concentration for Li(+) is about 100 mM, and the Li(+) concentration required to totally abolish I-1-Pase activity is 1 M. Its function is as follows. Phosphatase with broad specificity; it can dephosphorylate fructose 1,6-bisphosphate, both D and L isomers of inositol-1-phosphate (I-1-P) but displaying a 20-fold higher rate of hydrolysis of D-I-1-P than of the L isomer, 2'-AMP, pNPP, inositol-2-phosphate, beta-glycerol phosphate, and alpha-D-glucose-1-phosphate. Cannot hydrolyze glucose-6-phosphate, fructose-6-phosphate, 5'-AMP and NAD(+). May be involved in the biosynthesis of a unique osmolyte, di-myo-inositol 1,1-phosphate. The sequence is that of Fructose-1,6-bisphosphatase/inositol-1-monophosphatase (suhB) from Thermotoga maritima (strain ATCC 43589 / DSM 3109 / JCM 10099 / NBRC 100826 / MSB8).